A 486-amino-acid polypeptide reads, in one-letter code: Ribulose bisphosphate carboxylase large chain (486 aa).

2 residues coordinate substrate: asparagine 126 and threonine 176. The active-site Proton acceptor is the lysine 178. Substrate is bound at residue lysine 180. 3 residues coordinate Mg(2+): lysine 204, aspartate 206, and glutamate 207. Position 204 is an N6-carboxylysine (lysine 204). Histidine 296 serves as the catalytic Proton acceptor. Substrate is bound by residues arginine 297, histidine 329, and serine 381.

It belongs to the RuBisCO large chain family. Type I subfamily. In terms of assembly, heterohexadecamer of 8 large chains and 8 small chains. Mg(2+) serves as cofactor.

The catalysed reaction is 2 (2R)-3-phosphoglycerate + 2 H(+) = D-ribulose 1,5-bisphosphate + CO2 + H2O. It catalyses the reaction D-ribulose 1,5-bisphosphate + O2 = 2-phosphoglycolate + (2R)-3-phosphoglycerate + 2 H(+). RuBisCO catalyzes two reactions: the carboxylation of D-ribulose 1,5-bisphosphate, the primary event in carbon dioxide fixation, as well as the oxidative fragmentation of the pentose substrate. Both reactions occur simultaneously and in competition at the same active site. This Methylacidiphilum infernorum (isolate V4) (Methylokorus infernorum (strain V4)) protein is Ribulose bisphosphate carboxylase large chain.